A 129-amino-acid polypeptide reads, in one-letter code: Follitropin subunit beta (129 aa).

An N-terminal signal peptide occupies residues 1–18 (MKSIQFCFFFCCWKAICC). Intrachain disulfides connect cysteine 21–cysteine 69, cysteine 35–cysteine 84, cysteine 38–cysteine 122, cysteine 46–cysteine 100, cysteine 50–cysteine 102, and cysteine 105–cysteine 112. Asparagine 25 and asparagine 42 each carry an N-linked (GlcNAc...) asparagine glycan.

This sequence belongs to the glycoprotein hormones subunit beta family. Heterodimer. The active follitropin is a heterodimer composed of an alpha chain/CGA shared with other hormones and a unique beta chain/FSHB shown here.

Its subcellular location is the secreted. Its function is as follows. Together with the alpha chain CGA constitutes follitropin, the follicle-stimulating hormone, and provides its biological specificity to the hormone heterodimer. Binds FSHR, a G protein-coupled receptor, on target cells to activate downstream signaling pathways. Follitropin is involved in follicle development and spermatogenesis in reproductive organs. The polypeptide is Follitropin subunit beta (FSHB) (Cavia porcellus (Guinea pig)).